The chain runs to 635 residues: Interferon-induced GTP-binding protein Mx2 (635 aa).

A Dynamin-type G domain is found at 31–304 (DLALPAIAVI…LVQHIEKSMP (274 aa)). A G1 motif region spans residues 41–48 (GDQSSGKS). 41–48 (GDQSSGKS) serves as a coordination point for GTP. Residues 66 to 68 (VTR) are G2 motif. The G3 motif stretch occupies residues 142–145 (DLPG). Residues 142–146 (DLPGI) and 211–214 (TKPD) contribute to the GTP site. The G4 motif stretch occupies residues 211–214 (TKPD). Residues 243–246 (KCRG) are G5 motif. One can recognise a GED domain in the interval 549-635 (LREMMLHLKS…MKAHNYLVEF (87 aa)).

The protein belongs to the TRAFAC class dynamin-like GTPase superfamily. Dynamin/Fzo/YdjA family.

Its subcellular location is the nucleus. The protein resides in the cytoplasm. Does not inhibit strain RB-1 of the fish pathogen, infectious hematopoietic necrosis virus (IHNV). The polypeptide is Interferon-induced GTP-binding protein Mx2 (Oncorhynchus mykiss (Rainbow trout)).